A 414-amino-acid chain; its full sequence is Histidine--tRNA ligase (414 aa).

Belongs to the class-II aminoacyl-tRNA synthetase family. In terms of assembly, homodimer.

The protein localises to the cytoplasm. The enzyme catalyses tRNA(His) + L-histidine + ATP = L-histidyl-tRNA(His) + AMP + diphosphate + H(+). In Synechococcus sp. (strain RCC307), this protein is Histidine--tRNA ligase.